A 750-amino-acid polypeptide reads, in one-letter code: Polyribonucleotide nucleotidyltransferase (750 aa).

Mg(2+)-binding residues include Asp519 and Asp525. In terms of domain architecture, KH spans 585–644 (PRVIAVKIPVDKIGEVIGPKGKMINQIQEDTGADISIEDDGTVYIGATNGPSADAARSAI). An S1 motif domain is found at 656–728 (GERYLGTVVK…DRGKLSLSPV (73 aa)). The segment at 725-750 (LSPVVAEEEGAASEDAPAEAAEESAE) is disordered. Over residues 730-750 (AEEEGAASEDAPAEAAEESAE) the composition is skewed to acidic residues.

The protein belongs to the polyribonucleotide nucleotidyltransferase family. Mg(2+) is required as a cofactor.

Its subcellular location is the cytoplasm. The catalysed reaction is RNA(n+1) + phosphate = RNA(n) + a ribonucleoside 5'-diphosphate. In terms of biological role, involved in mRNA degradation. Catalyzes the phosphorolysis of single-stranded polyribonucleotides processively in the 3'- to 5'-direction. In Paenarthrobacter aurescens (strain TC1), this protein is Polyribonucleotide nucleotidyltransferase.